A 1472-amino-acid polypeptide reads, in one-letter code: ABC multidrug transporter atrI (1472 aa).

A disordered region spans residues 1 to 28; it reads MRRSNVVPVHSLTSSTNTGRDSRGEKYD. An ABC transporter 1 domain is found at 134 to 384; it reads FRRETWNFRN…FERQGWFCPP (251 aa). N-linked (GlcNAc...) asparagine glycosylation is found at N143, N277, N308, and N332. 7 consecutive transmembrane segments (helical) span residues 506–526, 530–550, 580–600, 605–625, 639–659, 664–684, and 744–764; these read ILAL…AGFY, ATLF…INSL, IPVK…LSGL, SQFF…SAVF, MTLA…VVPV, PWFK…ILIA, and FGIL…ATEL. Positions 784-793 are enriched in basic and acidic residues; it reads AHLKNGHEPG. The tract at residues 784-821 is disordered; the sequence is AHLKNGHEPGADEEAGAGKTVVSSSAEENKQDQGITSI. The span at 804–821 shows a compositional bias: polar residues; that stretch reads VVSSSAEENKQDQGITSI. An ABC transporter 2 domain is found at 828 to 1070; it reads FTWRDVVYDI…TLLKYFESHG (243 aa). ATP is bound at residue 864–871; it reads GVSGAGKT. 6 helical membrane passes run 1168 to 1188, 1204 to 1224, 1244 to 1264, 1282 to 1302, 1309 to 1329, and 1337 to 1357; these read YIAA…FSFF, VFML…LFIT, FMIA…ILVF, LVLL…DFVI, ETAG…NGVM, and GFWI…GMAA. N1402 carries an N-linked (GlcNAc...) asparagine glycan. The helical transmembrane segment at 1433–1453 threads the bilayer; that stretch reads FGIFWAYVVFDIAVAVMLYYC. N-linked (GlcNAc...) asparagine glycosylation is present at N1460.

The protein belongs to the ABC transporter superfamily. ABCG family. PDR (TC 3.A.1.205) subfamily.

The protein localises to the cell membrane. The enzyme catalyses itraconazole(in) + ATP + H2O = itraconazole(out) + ADP + phosphate + H(+). It catalyses the reaction voriconazole(in) + ATP + H2O = voriconazole(out) + ADP + phosphate + H(+). The catalysed reaction is fluconazole(in) + ATP + H2O = fluconazole(out) + ADP + phosphate + H(+). Pleiotropic ABC efflux transporter involved in the basal level of azole susceptibility. Confers resistance to fluconazole, itraconazole and voriconazole. The protein is ABC multidrug transporter atrI of Aspergillus fumigatus (strain ATCC MYA-4609 / CBS 101355 / FGSC A1100 / Af293) (Neosartorya fumigata).